The following is a 276-amino-acid chain: Undecaprenyl-diphosphatase 1 (276 aa).

7 helical membrane-spanning segments follow: residues 4–24 (ILIC…FLPV), 46–63 (TFDV…CWEY), 83–103 (FTLN…LFEK), 108–128 (VLFS…IILW), 187–207 (VATE…TLYE), 217–237 (VDSL…AFVC), and 252–272 (VFAW…YSGW).

This sequence belongs to the UppP family.

Its subcellular location is the cell inner membrane. The catalysed reaction is di-trans,octa-cis-undecaprenyl diphosphate + H2O = di-trans,octa-cis-undecaprenyl phosphate + phosphate + H(+). Functionally, catalyzes the dephosphorylation of undecaprenyl diphosphate (UPP). Confers resistance to bacitracin. This Burkholderia lata (strain ATCC 17760 / DSM 23089 / LMG 22485 / NCIMB 9086 / R18194 / 383) protein is Undecaprenyl-diphosphatase 1.